We begin with the raw amino-acid sequence, 184 residues long: Putative manganese efflux pump MntP (184 aa).

A run of 6 helical transmembrane segments spans residues 5 to 25, 38 to 58, 67 to 87, 107 to 127, 133 to 153, and 164 to 184; these read LISIIIIAIALAMDAFSVSLT, ILYYGLFFGFFQFIMPVIGYI, VSTVAPWIAFFLLLAIGLNMI, LTLLAVATSIDAFAVGITFAL, LLPCTIIGIVAFIFSISGIFI, and KFEILGGAVLILIGIKILLGY.

It belongs to the MntP (TC 9.B.29) family.

The protein localises to the cell membrane. Functionally, probably functions as a manganese efflux pump. This is Putative manganese efflux pump MntP from Methanobrevibacter smithii (strain ATCC 35061 / DSM 861 / OCM 144 / PS).